Reading from the N-terminus, the 432-residue chain is Asparagine--tRNA ligase (432 aa).

Belongs to the class-II aminoacyl-tRNA synthetase family. As to quaternary structure, homodimer.

It localises to the cytoplasm. It catalyses the reaction tRNA(Asn) + L-asparagine + ATP = L-asparaginyl-tRNA(Asn) + AMP + diphosphate + H(+). The protein is Asparagine--tRNA ligase of Lactobacillus delbrueckii subsp. bulgaricus (strain ATCC 11842 / DSM 20081 / BCRC 10696 / JCM 1002 / NBRC 13953 / NCIMB 11778 / NCTC 12712 / WDCM 00102 / Lb 14).